A 436-amino-acid polypeptide reads, in one-letter code: Xylose isomerase (436 aa).

Positions 306 and 308 each coordinate Mg(2+).

The protein belongs to the xylose isomerase family. Homotetramer. Mg(2+) is required as a cofactor.

The protein localises to the cytoplasm. The enzyme catalyses alpha-D-xylose = alpha-D-xylulofuranose. The protein is Xylose isomerase of Sinorhizobium fredii (strain NBRC 101917 / NGR234).